The following is a 282-amino-acid chain: Putative polysaccharide deacetylase YheN (282 aa).

A helical transmembrane segment spans residues 15 to 35 (LAFKFASLAVLCVLLLLMVIL). The NodB homology domain occupies 85–271 (KTVYLTFDDG…KLKEKGYSFG (187 aa)).

This sequence belongs to the polysaccharide deacetylase family.

It is found in the cell membrane. The chain is Putative polysaccharide deacetylase YheN (yheN) from Bacillus subtilis (strain 168).